A 464-amino-acid polypeptide reads, in one-letter code: UDP-N-acetylmuramate--L-alanine ligase (464 aa).

An ATP-binding site is contributed by 123–129 (GTHGKTT).

It belongs to the MurCDEF family.

The protein localises to the cytoplasm. The catalysed reaction is UDP-N-acetyl-alpha-D-muramate + L-alanine + ATP = UDP-N-acetyl-alpha-D-muramoyl-L-alanine + ADP + phosphate + H(+). It functions in the pathway cell wall biogenesis; peptidoglycan biosynthesis. Its function is as follows. Cell wall formation. The polypeptide is UDP-N-acetylmuramate--L-alanine ligase (Carboxydothermus hydrogenoformans (strain ATCC BAA-161 / DSM 6008 / Z-2901)).